Consider the following 278-residue polypeptide: HTH-type transcriptional regulator HdfR (278 aa).

Residues M1–T58 form the HTH lysR-type domain. Residues F18–R37 constitute a DNA-binding region (H-T-H motif).

Belongs to the LysR transcriptional regulatory family.

Its function is as follows. Negatively regulates the transcription of the flagellar master operon flhDC by binding to the upstream region of the operon. The chain is HTH-type transcriptional regulator HdfR from Salmonella schwarzengrund (strain CVM19633).